The following is a 506-amino-acid chain: (+)-piperitol/(+)-sesamin synthase CYP81Q2 (506 aa).

A helical transmembrane segment spans residues 3–23 (AEMLYSALALTFAIFMVYRIL). Heme is bound at residue C439.

The protein belongs to the cytochrome P450 family. Heme serves as cofactor. In terms of tissue distribution, expressed in seeds.

It is found in the membrane. The enzyme catalyses (+)-piperitol + reduced [NADPH--hemoprotein reductase] + O2 = (+)-sesamin + oxidized [NADPH--hemoprotein reductase] + 2 H2O + H(+). It catalyses the reaction (+)-pinoresinol + reduced [NADPH--hemoprotein reductase] + O2 = (+)-piperitol + oxidized [NADPH--hemoprotein reductase] + 2 H2O + H(+). Its function is as follows. Involved in the biosynthesis of (+)-sesamin, a furofuran class lignan. Functions in a dual catalytic mode. Catalyzes the synthesis of (+)-sesamin from (+)- pinoresinol by formation of two successive methylenedioxy bridges on (+)-pinoresinol and (+)-piperitol, respectively. This Sesamum radiatum (Black benniseed) protein is (+)-piperitol/(+)-sesamin synthase CYP81Q2.